The chain runs to 153 residues: D-amino acid oxidase regulator (153 aa).

An involved in targeting to the mitochondrion region spans residues 1 to 25 (MLEKLMGADSLQLFRSRYTLGKIYF). The interval 138–153 (KDQSCNHKEITSTKAE) is interaction with DAO.

As to quaternary structure, interacts with DAO (D-amino acid oxidase); the interaction is direct, can occur in the presence or absence of FAD or substrate bound to DAO, and results in a complex containing two DAO homodimers and two DAOA monomers. Interacts with DDO (D-aspartate oxidase); the interaction is direct. Interacts wih SOD1; the interaction is direct. Interacts with MSRB2; the interaction is direct. In terms of tissue distribution, expressed in the amygdala and in astrocytes of the cortex (at protein level). Expressed in the caudate nucleus, spinal cord and testis.

The protein localises to the cytoplasm. Its subcellular location is the cytosol. It is found in the golgi apparatus. The protein resides in the mitochondrion. May suppress DAO (D-amino acid oxidase) and SOD1 activity and promote their degradation. Has conversely also been suggested to function as a DAO activator. May stimulate the degradation of DDO (D-aspartate oxidase). May play a role in mitochondrial fission. This chain is D-amino acid oxidase regulator (DAOA), found in Homo sapiens (Human).